A 427-amino-acid chain; its full sequence is Enolase (427 aa).

Gln-163 lines the (2R)-2-phosphoglycerate pocket. Residue Glu-205 is the Proton donor of the active site. Mg(2+) is bound by residues Asp-242, Glu-285, and Asp-312. (2R)-2-phosphoglycerate is bound by residues Lys-337, Arg-366, Ser-367, and Lys-388. The active-site Proton acceptor is the Lys-337.

The protein belongs to the enolase family. The cofactor is Mg(2+).

It is found in the cytoplasm. Its subcellular location is the secreted. The protein localises to the cell surface. The catalysed reaction is (2R)-2-phosphoglycerate = phosphoenolpyruvate + H2O. Its pathway is carbohydrate degradation; glycolysis; pyruvate from D-glyceraldehyde 3-phosphate: step 4/5. In terms of biological role, catalyzes the reversible conversion of 2-phosphoglycerate (2-PG) into phosphoenolpyruvate (PEP). It is essential for the degradation of carbohydrates via glycolysis. This Ralstonia pickettii (strain 12J) protein is Enolase.